The chain runs to 395 residues: NADH-quinone oxidoreductase subunit D (395 aa).

It belongs to the complex I 49 kDa subunit family. As to quaternary structure, NDH-1 is composed of 14 different subunits. Subunits NuoB, C, D, E, F, and G constitute the peripheral sector of the complex.

The protein resides in the cell inner membrane. It carries out the reaction a quinone + NADH + 5 H(+)(in) = a quinol + NAD(+) + 4 H(+)(out). NDH-1 shuttles electrons from NADH, via FMN and iron-sulfur (Fe-S) centers, to quinones in the respiratory chain. The immediate electron acceptor for the enzyme in this species is believed to be a menaquinone. Couples the redox reaction to proton translocation (for every two electrons transferred, four hydrogen ions are translocated across the cytoplasmic membrane), and thus conserves the redox energy in a proton gradient. The polypeptide is NADH-quinone oxidoreductase subunit D (Chlorobium luteolum (strain DSM 273 / BCRC 81028 / 2530) (Pelodictyon luteolum)).